A 203-amino-acid chain; its full sequence is Urease accessory protein UreG (203 aa).

14–21 (GPVGSGKT) is a binding site for GTP.

Belongs to the SIMIBI class G3E GTPase family. UreG subfamily. As to quaternary structure, homodimer. UreD, UreF and UreG form a complex that acts as a GTP-hydrolysis-dependent molecular chaperone, activating the urease apoprotein by helping to assemble the nickel containing metallocenter of UreC. The UreE protein probably delivers the nickel.

It localises to the cytoplasm. Facilitates the functional incorporation of the urease nickel metallocenter. This process requires GTP hydrolysis, probably effectuated by UreG. In Allorhizobium ampelinum (strain ATCC BAA-846 / DSM 112012 / S4) (Agrobacterium vitis (strain S4)), this protein is Urease accessory protein UreG.